Reading from the N-terminus, the 89-residue chain is Small ribosomal subunit protein uS15 (89 aa).

It belongs to the universal ribosomal protein uS15 family. In terms of assembly, part of the 30S ribosomal subunit. Forms a bridge to the 50S subunit in the 70S ribosome, contacting the 23S rRNA.

Functionally, one of the primary rRNA binding proteins, it binds directly to 16S rRNA where it helps nucleate assembly of the platform of the 30S subunit by binding and bridging several RNA helices of the 16S rRNA. In terms of biological role, forms an intersubunit bridge (bridge B4) with the 23S rRNA of the 50S subunit in the ribosome. The polypeptide is Small ribosomal subunit protein uS15 (Saccharophagus degradans (strain 2-40 / ATCC 43961 / DSM 17024)).